Reading from the N-terminus, the 315-residue chain is NADH-ubiquinone oxidoreductase chain 1 (315 aa).

The next 8 membrane-spanning stretches (helical) occupy residues 6–26 (FILS…SVAF), 80–100 (ISPI…PFFV), 107–127 (LGGL…MIAG), 153–173 (LALI…MYFF), 177–197 (IYIW…TISL), 229–249 (LIFM…CVIF), 253–273 (DVFN…FIWA), and 292–312 (CFLS…ILLF).

This sequence belongs to the complex I subunit 1 family.

The protein resides in the mitochondrion inner membrane. The catalysed reaction is a ubiquinone + NADH + 5 H(+)(in) = a ubiquinol + NAD(+) + 4 H(+)(out). In terms of biological role, core subunit of the mitochondrial membrane respiratory chain NADH dehydrogenase (Complex I) that is believed to belong to the minimal assembly required for catalysis. Complex I functions in the transfer of electrons from NADH to the respiratory chain. The immediate electron acceptor for the enzyme is believed to be ubiquinone. This chain is NADH-ubiquinone oxidoreductase chain 1 (mt:ND1), found in Drosophila persimilis (Fruit fly).